The primary structure comprises 622 residues: MASMNQPQPYMDVHSHLSSGQTYASHPATAGALTHYQYPQQPPVLQPTSTYGPASSYSQYPYPNSVASSQSVPPPTTSISSQVPAQLLPLPVTNHPVPTHGYGNNSGTPMQGYVYDPTGQMAPPGAKPRVTATLWEDEGSLCYQVEAKGVCVARREDNGMINGTKLLNVAGMTRGRRDGILKSEKVRNVVKIGPMHLKGVWIPFDRALEFANKEKITDLLYPLFVQHISNLLYHPANQNQRNMTVPDSRRLEGPQPVVRTPQAQQPPSLHHHSLQTPVPSHMSQPGGRPSLDRAHTFPTPPASASSLIGITSQNNSYDWNPGMNSSVPNTQPLSIDTSLSNARSMPTTPATTPPGNNLQGMQSYQPQSGYDSKPYYSAAPSTHPQYAPQQPLPQQSMAQYGHSMPTSSYRDMAPPSSQRGSVTEIESDVKTERYGQGTVAKTEPEQEQEYAQPDSGYNTGRGSYYTTNPSVGGLAHDHSQLTPDMTGSPQQNGSGRMTPRTSNTAPQWAPGYTTPPRPAAASSLYNIVSDTRGTSGANGSTSDNYSVASNSGYSTGMNGSMGSNKRMRDDDDDRIVPPDSRGEFDTKRRKTLTETPVGGPVGGVPLGLQPMKAGGSLISARR.

2 disordered regions span residues 1-24 (MASM…QTYA) and 62-81 (YPNS…SISS). In terms of domain architecture, HTH APSES-type spans 129 to 235 (RVTATLWEDE…QHISNLLYHP (107 aa)). A DNA-binding region (H-T-H motif) is located at residues 163-184 (GTKLLNVAGMTRGRRDGILKSE). 2 disordered regions span residues 239-517 (NQRN…TPPR) and 549-622 (SNSG…SARR). 3 stretches are compositionally biased toward polar residues: residues 274–283 (LQTPVPSHMS), 302–345 (ASAS…ARSM), and 355–370 (GNNL…QSGY). Low complexity predominate over residues 384–395 (PQYAPQQPLPQQ). Composition is skewed to polar residues over residues 404–421 (MPTS…QRGS), 455–470 (SGYN…TNPS), 480–506 (QLTP…NTAP), and 549–563 (SNSG…SMGS). The tract at residues 565–590 (KRMRDDDDDRIVPPDSRGEFDTKRRK) is nuclear localization domain. Basic and acidic residues predominate over residues 566 to 586 (RMRDDDDDRIVPPDSRGEFDT).

This sequence belongs to the EFG1/PHD1/stuA family.

It localises to the nucleus. Transcription factor that regulates asexual reproduction. Binds the StuA-response elements (StRE) with the consensus sequence 5'-(A/T)CGCG(T/A)N(A/C)-3' at the promoters of target genes. Required from the very earliest events of asexual reproduction until completion of conidiophore development, but is not specifically required for differentiation of conidia. Represses transcription of the abaA developmental regulatory gene and of the developmentally regulated awh11 gene. Controls the expression of the catalase-peroxidase gene cpeA. Plays an important role in cell wall biogenesis during the development by controlling the transcription level of fksA. The protein is Cell pattern formation-associated protein stuA of Emericella nidulans (strain FGSC A4 / ATCC 38163 / CBS 112.46 / NRRL 194 / M139) (Aspergillus nidulans).